A 393-amino-acid chain; its full sequence is Alpha-pyrone synthesis polyketide synthase-like Pks18 (393 aa).

A disordered region spans residues 1–26 (MNVSAESGAPRRAGQRHEVGLAQLPP). C175 functions as the Nucleophile in the catalytic mechanism. H221 contacts substrate.

The protein belongs to the thiolase-like superfamily. Chalcone/stilbene synthases family. In terms of assembly, homodimer.

Its pathway is lipid metabolism; fatty acid biosynthesis. Functionally, involved in the biosynthesis of tri- and tetraketide alpha-pyrones. Pks18 catalyzes the extension of medium- and long-chain aliphatic acyl-CoA substrates by using malonyl-CoA as an extender molecule to synthesize polyketide products. This Mycobacterium bovis (strain ATCC BAA-935 / AF2122/97) protein is Alpha-pyrone synthesis polyketide synthase-like Pks18 (pks18).